The following is a 253-amino-acid chain: HTH-type transcriptional regulator AdiY (253 aa).

Residues 149–246 (DSVYQIIESD…GMTPLHYVSQ (98 aa)) enclose the HTH araC/xylS-type domain. 2 consecutive DNA-binding regions (H-T-H motif) follow at residues 166 to 187 (SMVA…KSEN) and 213 to 236 (ISQV…KDFY).

The polypeptide is HTH-type transcriptional regulator AdiY (adiY) (Escherichia coli (strain K12)).